Consider the following 585-residue polypeptide: Arginine--tRNA ligase (585 aa).

The short motif at 131–141 (ANPTGPMHVGH) is the 'HIGH' region element.

The protein belongs to the class-I aminoacyl-tRNA synthetase family. As to quaternary structure, monomer.

It is found in the cytoplasm. It carries out the reaction tRNA(Arg) + L-arginine + ATP = L-arginyl-tRNA(Arg) + AMP + diphosphate. The chain is Arginine--tRNA ligase from Agrobacterium fabrum (strain C58 / ATCC 33970) (Agrobacterium tumefaciens (strain C58)).